Consider the following 558-residue polypeptide: Nucleoprotein (558 aa).

Residues Met54–Ile237 form a binding site for the cap structure m7GTP region. Residues Asp382 and Glu384 each contribute to the Mg(2+) site. Asp382 and Glu384 together coordinate Mn(2+). Positions 392, 499, 502, and 518 each coordinate Zn(2+). A Mg(2+)-binding site is contributed by Asp522. Position 522 (Asp522) interacts with Mn(2+).

It belongs to the arenaviridae nucleocapsid protein family. As to quaternary structure, homomultimerizes to form the nucleocapsid. Binds to viral genomic RNA. Interacts with glycoprotein G2. Interacts with protein Z; this interaction probably directs the encapsidated genome to budding sites. Interacts with protein L; this interaction does not interfere with Z-L interaction. Interacts with host IKBKE (via Protein kinase domain); the interaction inhibits IKBKE kinase activity.

Its subcellular location is the virion. The protein resides in the host cytoplasm. In terms of biological role, encapsidates the genome, protecting it from nucleases. The encapsidated genomic RNA is termed the nucleocapsid (NC). Serves as template for viral transcription and replication. The increased presence of protein N in host cell does not seem to trigger the switch from transcription to replication as observed in other negative strain RNA viruses. Through the interaction with host IKBKE, strongly inhibits the phosphorylation and nuclear translocation of host IRF3, a protein involved in interferon activation pathway, leading to the inhibition of interferon-beta and IRF3-dependent promoters activation. Also encodes a functional 3'-5' exoribonuclease that degrades preferentially dsRNA substrates and thereby participates in the suppression of interferon induction. This Lymphocytic choriomeningitis virus (strain Armstrong) (LCMV) protein is Nucleoprotein.